The sequence spans 1223 residues: RNA-binding protein 20 (1223 aa).

3 disordered regions span residues 1–59, 238–288, and 306–381; these read MVLA…QAGL, QAYG…PTSQ, and GEVG…GARR. Positions 29–57 are enriched in pro residues; it reads APAPPAPPGPRGMQPPPPPPPPPPPPPQA. 2 stretches are compositionally biased toward polar residues: residues 238-261 and 314-331; these read QAYGSETDSQPSFLPASASTSGSV and GPNSQWESPHGFSGQSKP. A U1-type zinc finger spans residues 410–444; the sequence is HLPHICSICDKKVFDLKDWELHVKGKLHAQKCLLF. The RRM domain occupies 520–595; it reads RVVHICNLPE…EKLLIRMSKR (76 aa). The span at 626–636 shows a compositional bias: basic and acidic residues; sequence EADRYGPERPR. Disordered regions lie at residues 626-902, 971-995, and 1042-1102; these read EADR…TNME, EISLKSPKEPPSASTSCPSDMDVEM, and MSSP…STQE. Residues 630–657 form an RS region; the sequence is YGPERPRSRSPVSRSLSPRSHTPSFTSC. Phosphoserine occurs at positions 637, 639, 642, 644, 662, and 681. Low complexity predominate over residues 638–662; sequence RSPVSRSLSPRSHTPSFTSCSSSHS. Basic and acidic residues-rich tracts occupy residues 676-711 and 718-737; these read DSWEHSPYARREEERGPAPWRENGEDKRDRTDMWAH and RQVDKTELDERLEGGRGYRE. Over residues 742–752 the composition is skewed to low complexity; it reads SGSPSSLHSVS. At S744 the chain carries Phosphoserine. Composition is skewed to basic and acidic residues over residues 755–774 and 786–852; these read KSREDGYYRKEPKGKSDKYL and RKDE…KEEQ. Residues S803, S861, S872, S887, S889, S973, S976, and S1044 each carry the phosphoserine modification. Residues 864 to 884 are compositionally biased toward basic and acidic residues; it reads RQEKETESSDAENTRTRKEQD. Residues 1083-1102 show a composition bias toward polar residues; that stretch reads STPTETDLQSQACQGVSTQE. Phosphoserine is present on residues S1111 and S1116. The Matrin-type zinc-finger motif lies at 1157 to 1188; sequence FYCKLCGLFYTSEEMAKMSHCRSAVHYRNLQK. Residues 1197-1223 form a disordered region; it reads GLKETEGAGSPRPEDSGIVPHFERKKL. S1206 carries the post-translational modification Phosphoserine.

In terms of assembly, associates with components of the U1 and U2 U1 small nuclear ribonucleoprotein complexes. Phosphorylation regulates the subcellular localization. Phosphorylation of Ser-637 and Ser-639 in the RS (arginine/serine-rich) region promotes nuclear localization of the protein. In contrast, phosphorylation of the C-terminal disordered region promotes localization to cytoplasmic ribonucleoprotein granules.

It localises to the nucleus. It is found in the cytoplasm. Its subcellular location is the cytoplasmic ribonucleoprotein granule. Functionally, RNA-binding protein that acts as a regulator of mRNA splicing of a subset of genes encoding key structural proteins involved in cardiac development, such as TTN (Titin), CACNA1C, CAMK2D or PDLIM5/ENH. Acts as a repressor of mRNA splicing: specifically binds the 5'UCUU-3' motif that is predominantly found within intronic sequences of pre-mRNAs, leading to the exclusion of specific exons in target transcripts. RBM20-mediated exon skipping is hormone-dependent and is essential for TTN isoform transition in both cardiac and skeletal muscles. RBM20-mediated exon skipping of TTN provides substrates for the formation of circular RNA (circRNAs) from the TTN transcripts. Together with RBM24, promotes the expression of short isoforms of PDLIM5/ENH in cardiomyocytes. The sequence is that of RNA-binding protein 20 from Sus scrofa (Pig).